The sequence spans 244 residues: Cell adhesion molecule CEACAM4 (244 aa).

Positions 1–35 (MGPPSAAPRGGHRPWQGLLITASLLTFWHPPTTVQ) are cleaved as a signal peptide. One can recognise an Ig-like V-type domain in the interval 36 to 139 (FTIEALPSSA…DSDQATGQLH (104 aa)). Residues 36 to 155 (FTIEALPSSA…PGLPVGAVAG (120 aa)) are Extracellular-facing. Asn-57, Asn-104, Asn-111, and Asn-126 each carry an N-linked (GlcNAc...) asparagine glycan. Residues 156–176 (IVTGVLVGVALVAALVCFLLL) traverse the membrane as a helical segment. The Cytoplasmic portion of the chain corresponds to 177-244 (SRTGRASIQR…QIDHKADVVS (68 aa)). The tract at residues 186–215 (RDLREQPPPASTPGHGPSHRSTFSAPLPSP) is disordered. An ITAM motif is present at residues 222–236 (YEELLYSDANIYCQI).

Belongs to the immunoglobulin superfamily. CEA family. In terms of assembly, interacts through its phosphorylated ITAM domain with the SH2 domain-containing cytoplasmic proteins involved in signaling processes during phagocytosis. N-glycosylated. In terms of processing, the cytoplasmic ITAM-like sequence becomes tyrosine phosphorylated by SRC family PTKs upon ligand-mediated receptor clustering and allows to initiate phagocytosis of bound ligand. Granulocytes.

It localises to the membrane. Functionally, granulocyte orphan receptor that acts as an trigger efficient phagocytosis of attached particles. This chain is Cell adhesion molecule CEACAM4, found in Homo sapiens (Human).